The sequence spans 323 residues: tRNA dimethylallyltransferase (323 aa).

15–22 is an ATP binding site; that stretch reads GATGSGKT. Substrate is bound at residue 17–22; that stretch reads TGSGKT. 2 interaction with substrate tRNA regions span residues 40–43 and 164–168; these read DSRQ and QRLIR.

Belongs to the IPP transferase family. In terms of assembly, monomer. Mg(2+) serves as cofactor.

It carries out the reaction adenosine(37) in tRNA + dimethylallyl diphosphate = N(6)-dimethylallyladenosine(37) in tRNA + diphosphate. Catalyzes the transfer of a dimethylallyl group onto the adenine at position 37 in tRNAs that read codons beginning with uridine, leading to the formation of N6-(dimethylallyl)adenosine (i(6)A). The polypeptide is tRNA dimethylallyltransferase (Chloroherpeton thalassium (strain ATCC 35110 / GB-78)).